The chain runs to 637 residues: MSQQETHGFQTEVKQLLHLMIHSLYSNKEIFLRELVSNAADAADKLRYLALTNDALYEGDGELRVRISADKDKGTVTIEDNGVGMTRDGVIEHLGTIAKSGTAEFFKNLSGEASKDSQLIGQFGVGFYSAFIVAKKVTVRTRAAGHKADEAVLWESEGEGSFTVETITKASRGTEITLHLRDEEKEFADDWRLRSIITKYSDHISVPVEMWQEGTPERDGPDGEKIPATEGYWKVMNKATALWMRNKSEISDEEYQEFYKHISHDYTDALLWSHNRVEGKQEYTNLLYIPSKAPWDLWNRDRKHGLKLFVQRVFIMDDAEQFMPSYLRFVQGLIDSNDLPLNVSREILQDNHITKAMRTGITKRVLGMLEKLAKDDAEKYQQFWAEFGQVLKEGPAEDFANRERIAGLLRFASTHTGSAAPTVSLDDYISRMKEGQTKIYYIVADSYDAAANSPHLELLRKKDIEVLLMSERIDEWLINHLTEYKEKQLHSVTRGELELGELEDAAEKEAQEKLAEESAPLIERIKAALGTKVADVKVTSRLTDTPACVVTGEGEMSTQMIKLMQAAGQPVPEVKPTFEVNPAHPLVSRLNDLQDETAFADWSNLLLQQAQLSEKGSLADPSAFIKLMNQMLLANMK.

The a; substrate-binding stretch occupies residues 1–345; sequence MSQQETHGFQ…SNDLPLNVSR (345 aa). The b stretch occupies residues 346 to 562; sequence EILQDNHITK…EGEMSTQMIK (217 aa). Residues 563 to 637 are c; the sequence is LMQAAGQPVP…MNQMLLANMK (75 aa).

It belongs to the heat shock protein 90 family. In terms of assembly, homodimer.

It is found in the cytoplasm. Its function is as follows. Molecular chaperone. Has ATPase activity. This Shewanella sp. (strain W3-18-1) protein is Chaperone protein HtpG.